Here is a 156-residue protein sequence, read N- to C-terminus: Small ribosomal subunit protein uS7 (156 aa).

This sequence belongs to the universal ribosomal protein uS7 family. As to quaternary structure, part of the 30S ribosomal subunit. Contacts proteins S9 and S11.

Its function is as follows. One of the primary rRNA binding proteins, it binds directly to 16S rRNA where it nucleates assembly of the head domain of the 30S subunit. Is located at the subunit interface close to the decoding center, probably blocks exit of the E-site tRNA. The chain is Small ribosomal subunit protein uS7 from Cellvibrio japonicus (strain Ueda107) (Pseudomonas fluorescens subsp. cellulosa).